We begin with the raw amino-acid sequence, 396 residues long: THAP domain-containing protein 5 (396 aa).

The THAP-type zinc-finger motif lies at 2-85 (MPRYCAAICC…LKQTAVPTIF (84 aa)). Residues 86-113 (SLPEDNQGKDPSKKKSQKKNLEDEKEVC) form a disordered region. Positions 91-113 (NQGKDPSKKKSQKKNLEDEKEVC) are enriched in basic and acidic residues. An HCFC1-binding motif (HBM) motif is present at residues 322-325 (EHSY). Positions 349–382 (LELKEQQTLGRLKSLEALVRQLKQENWLSEENVK) form a coiled coil.

As to quaternary structure, interacts with HTRA2; under apoptotic conditions. Interacts with ABRAXAS2. Cleaved by HTRA2 during apoptosis.

Its subcellular location is the nucleus. In terms of biological role, has sequence-specific DNA-binding activity and can function as transcriptional repressor (in vitro). May be a regulator of cell cycle: THAP5 overexpression in human cell lines causes cell cycle arrest at G2/M phase. This is THAP domain-containing protein 5 (THAP5) from Macaca fascicularis (Crab-eating macaque).